The primary structure comprises 382 residues: MLRWTVHLEGGPRRVNHAAVAVGHRVYSFGGYCSGEDYETLRQIDVHIFNAVSLRWTKLPPVRPAVRGQAPVVPYMRYGHSTVLIDDTVFLWGGRNDTEGACNVLYAFDVNTHKWSTPRVSGTVPGARDGHSACVLGKIMYIFGGYEQLADCFSNDIHKLDTSTMTWTLVCTKGNPARWRDFHSATMLGNHMYVFGGRADRFGPFHSNNEIYCNRIRVFDTRTEAWLDCPHTPVLPEGRRSHSAFGYNGELYIFGGYNARLNRHFHDLWKFNPGSFTWKKIEPKGKGPCPRRRQCCCIVGDKIVLFGGTSPSPEEGLGDEFDLIDHSDLHILDFSPSLKTLCKLAVIQYNLDQSCLPHDIRWELNAMTTNSNISRPIVSSHG.

Kelch repeat units lie at residues 25-77 (RVYS…PYMR), 88-138 (TVFL…VLGK), 139-189 (IMYI…TMLG), 191-249 (HMYV…GYNG), and 251-301 (LYIF…IVGD).

As to quaternary structure, component of a CRL2(KLHDC3) complex, also named ECS(KLHDC3) complex, composed of CUL2, Elongin BC (ELOB and ELOC), RBX1 and substrate-specific adapter KLHDC3. May form oligomers as a KLHDC3-ELOB-ELOC complex; this interaction is likely autoinhibitory for the E3 ligase complex.

The protein resides in the cytoplasm. The protein operates within protein modification; protein ubiquitination. Substrate-recognition component of a Cul2-RING (CRL2) E3 ubiquitin-protein ligase complex of the DesCEND (destruction via C-end degrons) pathway, which recognizes a C-degron located at the extreme C terminus of target proteins, leading to their ubiquitination and degradation. The C-degron recognized by the DesCEND pathway is usually a motif of less than ten residues and can be present in full-length proteins, truncated proteins or proteolytically cleaved forms. The CRL2(KLHDC3) complex specifically recognizes proteins with a glycine (Gly) at the C-terminus, leading to their ubiquitination and degradation: recognizes the C-terminal -Arg-(Xaa)n-Arg-Gly, -Arg-(Xaa)n-Lys-Gly, and -Arg-(Xaa)n-Gln-Gly degrons. The CRL2(KLHDC3) complex mediates ubiquitination and degradation of truncated SELENOV and SEPHS2 selenoproteins produced by failed UGA/Sec decoding, which end with a glycine. May be involved in meiotic recombination process. The protein is Kelch domain-containing protein 3 of Rattus norvegicus (Rat).